Consider the following 178-residue polypeptide: E1B protein, small T-antigen (178 aa).

It belongs to the adenoviridae E1B 19 kDa protein family.

It is found in the host cell membrane. The protein resides in the host nucleus envelope. It localises to the host nucleus lamina. In terms of biological role, putative adenovirus Bcl-2 homolog that inhibits apoptosis induced by TNF or FAS pathways, as well as p53-mediated apoptosis. Without E1B 19K function, virus production is compromised because of premature death of host cell. Interacts with Bax protein in cell lysates. The chain is E1B protein, small T-antigen from Human adenovirus B serotype 7 (HAdV-7).